Here is a 67-residue protein sequence, read N- to C-terminus: Protein AaeX (67 aa).

A run of 2 helical transmembrane segments spans residues 8–28 (VLFGLSFPPAFFALLAALPLF) and 47–67 (PALFNCALYGCLFYLVSWLFI).

It belongs to the AaeX family.

Its subcellular location is the cell membrane. This is Protein AaeX from Edwardsiella piscicida.